The sequence spans 345 residues: 4-hydroxyproline 2-epimerase (345 aa).

Q85 lines the substrate pocket. S93 functions as the Proton acceptor in the catalytic mechanism. Residues 94–95 (GS) and D251 contribute to the substrate site. The active-site Proton donor is the C255. 256 to 257 (GT) provides a ligand contact to substrate.

It belongs to the proline racemase family.

It catalyses the reaction trans-4-hydroxy-L-proline = cis-4-hydroxy-D-proline. In terms of biological role, catalyzes the epimerization of trans-4-hydroxy-L-proline (t4LHyp) to cis-4-hydroxy-D-proline (c4DHyp). May be involved in a degradation pathway of t4LHyp. Can also catalyze the epimerization of trans-3-hydroxy-L-proline (t3LHyp) to cis-3-hydroxy-D-proline (c3DHyp) in vitro, albeit with 2-fold lower efficiency. Displays no proline racemase activity. This chain is 4-hydroxyproline 2-epimerase, found in Rhizobium etli (strain ATCC 51251 / DSM 11541 / JCM 21823 / NBRC 15573 / CFN 42).